The primary structure comprises 76 residues: ATP synthase subunit c (76 aa).

The next 2 membrane-spanning stretches (helical) occupy residues 7–27 (VATA…IGII) and 50–70 (FIGI…AFLI).

This sequence belongs to the ATPase C chain family. F-type ATPases have 2 components, F(1) - the catalytic core - and F(0) - the membrane proton channel. F(1) has five subunits: alpha(3), beta(3), gamma(1), delta(1), epsilon(1). F(0) has four main subunits: a(1), b(1), b'(1) and c(10-14). The alpha and beta chains form an alternating ring which encloses part of the gamma chain. F(1) is attached to F(0) by a central stalk formed by the gamma and epsilon chains, while a peripheral stalk is formed by the delta, b and b' chains.

It localises to the cell membrane. In terms of biological role, f(1)F(0) ATP synthase produces ATP from ADP in the presence of a proton or sodium gradient. F-type ATPases consist of two structural domains, F(1) containing the extramembraneous catalytic core and F(0) containing the membrane proton channel, linked together by a central stalk and a peripheral stalk. During catalysis, ATP synthesis in the catalytic domain of F(1) is coupled via a rotary mechanism of the central stalk subunits to proton translocation. Key component of the F(0) channel; it plays a direct role in translocation across the membrane. A homomeric c-ring of between 10-14 subunits forms the central stalk rotor element with the F(1) delta and epsilon subunits. This Chloroflexus aurantiacus (strain ATCC 29366 / DSM 635 / J-10-fl) protein is ATP synthase subunit c.